A 284-amino-acid chain; its full sequence is tRNA uridine(34) hydroxylase (284 aa).

Residues 132-226 form the Rhodanese domain; sequence TGRPVVMLDT…YFEEVGGAHY (95 aa). The active-site Cysteine persulfide intermediate is the Cys-186.

Belongs to the TrhO family.

The enzyme catalyses uridine(34) in tRNA + AH2 + O2 = 5-hydroxyuridine(34) in tRNA + A + H2O. Catalyzes oxygen-dependent 5-hydroxyuridine (ho5U) modification at position 34 in tRNAs. The sequence is that of tRNA uridine(34) hydroxylase from Burkholderia cenocepacia (strain ATCC BAA-245 / DSM 16553 / LMG 16656 / NCTC 13227 / J2315 / CF5610) (Burkholderia cepacia (strain J2315)).